The following is an 855-amino-acid chain: DNA mismatch repair protein MutS (855 aa).

Position 613 to 620 (613 to 620 (GPNMGGKS)) interacts with ATP. The tract at residues 795–816 (ETTSLPHEVPSQQSGKPASPMQ) is disordered. The segment covering 796–816 (TTSLPHEVPSQQSGKPASPMQ) has biased composition (polar residues).

This sequence belongs to the DNA mismatch repair MutS family.

Its function is as follows. This protein is involved in the repair of mismatches in DNA. It is possible that it carries out the mismatch recognition step. This protein has a weak ATPase activity. This is DNA mismatch repair protein MutS from Pseudomonas paraeruginosa (strain DSM 24068 / PA7) (Pseudomonas aeruginosa (strain PA7)).